The chain runs to 380 residues: Lipid-A-disaccharide synthase (380 aa).

Belongs to the LpxB family.

It catalyses the reaction a lipid X + a UDP-2-N,3-O-bis[(3R)-3-hydroxyacyl]-alpha-D-glucosamine = a lipid A disaccharide + UDP + H(+). It participates in bacterial outer membrane biogenesis; LPS lipid A biosynthesis. Condensation of UDP-2,3-diacylglucosamine and 2,3-diacylglucosamine-1-phosphate to form lipid A disaccharide, a precursor of lipid A, a phosphorylated glycolipid that anchors the lipopolysaccharide to the outer membrane of the cell. The sequence is that of Lipid-A-disaccharide synthase from Pseudomonas syringae pv. tomato (strain ATCC BAA-871 / DC3000).